The chain runs to 314 residues: MDPKNLNRHQVPNFLNPPPPPRNQGLVDDDAASAVVSDENRKPTTEIKDFQIVVSASDKEPNKKSQNQNQLGPKRSSNKDRHTKVEGRGRRIRMPALCAARIFQLTRELGHKSDGETIQWLLQQAEPSIIAATGSGTIPASALASSAATSNHHQGGSLTAGLMISHDLDGGSSSSGRPLNWGIGGGEGVSRSSLPTGLWPNVAGFGSGVPTTGLMSEGAGYRIGFPGFDFPGVGHMSFASILGGNHNQMPGLELGLSQEGNVGVLNPQSFTQIYQQMGQAQAQAQGRVLHHMHHNHEEHQQESGEKDDSQGSGR.

Disordered regions lie at residues 1 to 91 (MDPK…RGRR) and 295 to 314 (NHEE…GSGR). Composition is skewed to basic and acidic residues over residues 38–49 (DENRKPTTEIKD) and 77–89 (SNKD…EGRG). The region spanning 78–132 (NKDRHTKVEGRGRRIRMPALCAARIFQLTRELGHKSDGETIQWLLQQAEPSIIAA) is the TCP domain.

In terms of assembly, interacts with PURA1. Interacts with SPL.

It localises to the nucleus. Transcription factor that binds to the site II motif (3'-TGGGCC/T-5') in the promoter of PCNA-2 and to 3'-GCCCG/A-5' elements in the promoters of cyclin CYCB1-1 and ribosomal protein genes. The chain is Transcription factor TCP20 (TCP20) from Arabidopsis thaliana (Mouse-ear cress).